A 477-amino-acid polypeptide reads, in one-letter code: Alkaline phosphatase (477 aa).

A Mg(2+)-binding site is contributed by aspartate 44. Aspartate 44 provides a ligand contact to Zn(2+). The active-site Phosphoserine intermediate is serine 94. An N-linked (GlcNAc...) asparagine glycan is attached at asparagine 124. Residues histidine 155 and threonine 157 each coordinate Mg(2+). Cysteine 165 and cysteine 185 are joined by a disulfide. A glycan (N-linked (GlcNAc...) asparagine) is linked at asparagine 214. Glutamate 315 is a binding site for Mg(2+). Zn(2+) contacts are provided by aspartate 320, histidine 324, aspartate 361, and histidine 362. Asparagine 413 is a glycosylation site (N-linked (GlcNAc...) asparagine). Residue histidine 437 coordinates Zn(2+).

In terms of assembly, homodimer. Requires Mg(2+) as cofactor. The cofactor is Zn(2+).

It localises to the cell membrane. The catalysed reaction is a phosphate monoester + H2O = an alcohol + phosphate. The protein is Alkaline phosphatase of Gadus morhua (Atlantic cod).